Consider the following 166-residue polypeptide: Ribosome maturation factor RimP (166 aa).

It belongs to the RimP family.

The protein localises to the cytoplasm. Its function is as follows. Required for maturation of 30S ribosomal subunits. The chain is Ribosome maturation factor RimP from Paramagnetospirillum magneticum (strain ATCC 700264 / AMB-1) (Magnetospirillum magneticum).